Consider the following 1369-residue polypeptide: Phospholipase D1 (1369 aa).

Disordered stretches follow at residues 27–90 and 318–340; these read YSEK…SSWH and ESHS…GRKK. The segment covering 31–53 has biased composition (basic and acidic residues); the sequence is GTGRKDAEDHTPSKITDLEKNVD. The PX domain occupies 208–379; the sequence is TDLIKVSVLD…NVLYSFLEFS (172 aa). PLD phosphodiesterase domains follow at residues 641–668 and 941–968; these read LFWA…CFGR and EMIY…NERS. Positions 1277–1289 are enriched in basic and acidic residues; sequence HETHEKSENDPKN. Residues 1277–1320 are disordered; it reads HETHEKSENDPKNPKAGSQGSGNTSASEDSKTEKPKTRTNNGLQ. Polar residues predominate over residues 1292-1303; sequence AGSQGSGNTSAS.

This sequence belongs to the phospholipase D family.

It localises to the cytoplasm. It carries out the reaction a 1,2-diacyl-sn-glycero-3-phosphocholine + H2O = a 1,2-diacyl-sn-glycero-3-phosphate + choline + H(+). With respect to regulation, activity is slightly stimulated by oleate. Functionally, required for meiosis and spore formation. Seems to be involved in the coordinate induction of late meiotic events. This Schizosaccharomyces pombe (strain 972 / ATCC 24843) (Fission yeast) protein is Phospholipase D1 (pld1).